Reading from the N-terminus, the 471-residue chain is Casein kinase 1-like protein 9 (471 aa).

The region spanning 9-278 (FKLGRKIGSG…LKRLFRDLFI (270 aa)) is the Protein kinase domain. Residues 15–23 (IGSGSFGEL) and Lys-38 each bind ATP. Asp-128 acts as the Proton acceptor in catalysis. The segment at 300 to 471 (SSSGSSSRTR…RSLELLTLRK (172 aa)) is disordered. Positions 325–339 (EKQERIAGKETRENR) are enriched in basic and acidic residues. Residues 385–430 (SSRYGSSSRRAIPSSSRPSSAGGPSDSRSSSRLVTSTGGVGTVSNR) show a composition bias toward low complexity. Polar residues predominate over residues 431–449 (ASTSQRIQAGNESRTSSFS). The segment covering 454–464 (NTREDPLRRSL) has biased composition (basic and acidic residues).

The protein belongs to the protein kinase superfamily. CK1 Ser/Thr protein kinase family. Casein kinase I subfamily. In terms of assembly, monomer. Post-translationally, autophosphorylated on serine, threonine and tyrosine residues. Expressed in leaves, stems and flowers.

It is found in the cytoplasm. It localises to the nucleus. The catalysed reaction is L-seryl-[protein] + ATP = O-phospho-L-seryl-[protein] + ADP + H(+). It catalyses the reaction L-threonyl-[protein] + ATP = O-phospho-L-threonyl-[protein] + ADP + H(+). Casein kinases are operationally defined by their preferential utilization of acidic proteins such as caseins as substrates. Can phosphorylate casein on serine and threonine residues, and poly(Glu,Tyr) in vitro. This Arabidopsis thaliana (Mouse-ear cress) protein is Casein kinase 1-like protein 9.